The following is a 628-amino-acid chain: MDYNSKTSTGGRNMAGARALWRATGMTDGDFGKPIIAIANSFTQFVPGHVHLKDLGQMVAREIEKAGGVAKEFNTIAVDDGIAMGHSGMLYSLPSRDLIADSVEYMVNAHCADALVCISNCDKITPGMLMAALRLNIPVVFISGGPMEAGKILASTVGKSHNNEDSSGGAIRKLDLVDAMMDAADDSISDEDVAAIEASACPTCGSCSGMFTANSMNCLTEALGLALPGNGSLLATHSLRRELFLEAGRTIVSLAKRRYEQDDDSVLPRSIATKAAFENAMTLDIAMGGSTNTILHLLAAANEAEVDFKMHDIDRLSRGVPCLAKVAPASQKYHMEDVHRAGGVFALLAELDRAGLLNTDLPTIHSATMKEAIDKWDIMNPDNLEARARYIAAPGGVRTTEAFSQSKEWSNLDVNRESGCIRSAQHAYSEDGGLAVLYGNIAERGCVVKTAGVDDSILVFTGRARIFESQDDAVAAVLDDQIVAGDVVIIRFEGPKGGPGMQEMLYPTTYLKSKGLGKECALLTDGRFSGGTSGLSIGHASPEAAEGGAIGLVQEGDTIHIDIPNRTINMQVSDEELAARREEMDSRGRDAWKPVSRDRHVSPALRAYAAMTTSADTGAVRDVSQVER.

Aspartate 80 serves as a coordination point for Mg(2+). Cysteine 121 is a [2Fe-2S] cluster binding site. Mg(2+)-binding residues include aspartate 122 and lysine 123. Lysine 123 is modified (N6-carboxylysine). Residue cysteine 207 coordinates [2Fe-2S] cluster. A Mg(2+)-binding site is contributed by glutamate 503. Serine 529 serves as the catalytic Proton acceptor.

Belongs to the IlvD/Edd family. As to quaternary structure, homodimer. The cofactor is [2Fe-2S] cluster. It depends on Mg(2+) as a cofactor.

It catalyses the reaction (2R)-2,3-dihydroxy-3-methylbutanoate = 3-methyl-2-oxobutanoate + H2O. The enzyme catalyses (2R,3R)-2,3-dihydroxy-3-methylpentanoate = (S)-3-methyl-2-oxopentanoate + H2O. Its pathway is amino-acid biosynthesis; L-isoleucine biosynthesis; L-isoleucine from 2-oxobutanoate: step 3/4. It functions in the pathway amino-acid biosynthesis; L-valine biosynthesis; L-valine from pyruvate: step 3/4. Functions in the biosynthesis of branched-chain amino acids. Catalyzes the dehydration of (2R,3R)-2,3-dihydroxy-3-methylpentanoate (2,3-dihydroxy-3-methylvalerate) into 2-oxo-3-methylpentanoate (2-oxo-3-methylvalerate) and of (2R)-2,3-dihydroxy-3-methylbutanoate (2,3-dihydroxyisovalerate) into 2-oxo-3-methylbutanoate (2-oxoisovalerate), the penultimate precursor to L-isoleucine and L-valine, respectively. The protein is Dihydroxy-acid dehydratase of Psychrobacter arcticus (strain DSM 17307 / VKM B-2377 / 273-4).